A 337-amino-acid chain; its full sequence is Ketol-acid reductoisomerase (NADP(+)) (337 aa).

Residues 3 to 183 (VEMFYDDDAD…GGTRAGVIKT (181 aa)) enclose the KARI N-terminal Rossmann domain. Residues 26–29 (YGSQ), Lys49, Ser52, Ser54, and 84–87 (DTAQ) contribute to the NADP(+) site. Residue His109 is part of the active site. An NADP(+)-binding site is contributed by Gly135. Residues 184–329 (TFKEETETDL…KKLRDLMSWV (146 aa)) form the KARI C-terminal knotted domain. Mg(2+) contacts are provided by Asp192, Glu196, Glu228, and Glu232. Residue Ser253 coordinates substrate.

This sequence belongs to the ketol-acid reductoisomerase family. Mg(2+) serves as cofactor.

The enzyme catalyses (2R)-2,3-dihydroxy-3-methylbutanoate + NADP(+) = (2S)-2-acetolactate + NADPH + H(+). It catalyses the reaction (2R,3R)-2,3-dihydroxy-3-methylpentanoate + NADP(+) = (S)-2-ethyl-2-hydroxy-3-oxobutanoate + NADPH + H(+). It functions in the pathway amino-acid biosynthesis; L-isoleucine biosynthesis; L-isoleucine from 2-oxobutanoate: step 2/4. The protein operates within amino-acid biosynthesis; L-valine biosynthesis; L-valine from pyruvate: step 2/4. Its function is as follows. Involved in the biosynthesis of branched-chain amino acids (BCAA). Catalyzes an alkyl-migration followed by a ketol-acid reduction of (S)-2-acetolactate (S2AL) to yield (R)-2,3-dihydroxy-isovalerate. In the isomerase reaction, S2AL is rearranged via a Mg-dependent methyl migration to produce 3-hydroxy-3-methyl-2-ketobutyrate (HMKB). In the reductase reaction, this 2-ketoacid undergoes a metal-dependent reduction by NADPH to yield (R)-2,3-dihydroxy-isovalerate. In Rhodococcus jostii (strain RHA1), this protein is Ketol-acid reductoisomerase (NADP(+)).